The chain runs to 744 residues: MATSITAGLQKAQQAVQDTATKNKKIVDISHDTVNVHTDQEQRTDFGVAITDPDHWLRVTNETHSGPSLLEDHIARERIHRFDHERIPERVVHARGTGAYGNFTLKESIEDLTYAGVLTDTSRNTPVFVRFSTVQGSRGSADTVRDVRGFAVKFYTDEGNWDIVGNNIPVFFIQDAIKFPDFVHAVKPEPHNEVPQAQTAHNNFWDFVYLHPEATHMFMWAMSDRAIPRSYRMMQGFGVNTFSLVNKEGKRHFVKFHWIPHLGVHSLVWDEALKLAGQDPDFHRKDLMEAIDNKAYPKWDFAIQAIPEEDQDKFEFDIFDATKVWPEEQVPLRVVGELELNRNIDEFFPETEQVAFCTSHIVPGIDFSDDPLLQGRNFSYQDTQISRLGVNWEEIPINRPVCPFLNHNRDGAKRHRITKGTVNYWPNRFEANPPASDKGFKSHPAPITGRKRRDLTPKFKEYHNQAQLFYNSLSEVEKVHVKKAFSFELDHCDDPIVYERLAGQRLAEIDLPLAQAVAEMVGAPIPTKALRDNHGKTSVRLSQFDFTPKAPGIISRRIAIIIGDGYDKIAFNGMKAAILAAQALPFVIGTKRSAIYAQGEDKNSSKGVIPDHMYDGMRSTMFDATFIPGGSHIETLQKNGQIRYWIAETFGHLKALGAMGEAAQLVKEVLGNVMGVQIAGADSAEPVEWYGVVTARGPESAESLSEGFKVLKDAGDFTSKFFYQISQHRNWQRELDGLASTVAF.

Residues His-93 and Asn-166 contribute to the active site. Tyr-380 is a binding site for heme.

The protein belongs to the catalase family. Heme serves as cofactor.

The protein resides in the peroxisome matrix. It carries out the reaction 2 H2O2 = O2 + 2 H2O. In terms of biological role, catalyzes the degradation of hydrogen peroxide (H(2)O(2)) generated by peroxisomal oxidases to water and oxygen, thereby protecting cells from the toxic effects of hydrogen peroxide. This chain is Catalase A (catA), found in Emericella nidulans (strain FGSC A4 / ATCC 38163 / CBS 112.46 / NRRL 194 / M139) (Aspergillus nidulans).